Consider the following 106-residue polypeptide: UPF0060 membrane protein Bphy_5052 (106 aa).

4 helical membrane-spanning segments follow: residues 4-24, 30-50, 58-78, and 82-102; these read LLLY…PWRW, SVWL…LLTF, VYAA…WCVD, and PSAW…IIAF.

This sequence belongs to the UPF0060 family.

The protein localises to the cell inner membrane. This chain is UPF0060 membrane protein Bphy_5052, found in Paraburkholderia phymatum (strain DSM 17167 / CIP 108236 / LMG 21445 / STM815) (Burkholderia phymatum).